Consider the following 528-residue polypeptide: GMP synthase [glutamine-hydrolyzing] (528 aa).

Residues 22-212 (AILVLDFGSQ…VFKICQSQTN (191 aa)) form the Glutamine amidotransferase type-1 domain. Cys99 (nucleophile) is an active-site residue. Residues His186 and Glu188 contribute to the active site. The region spanning 213–403 (WSLESNVETI…LGIKKEALYR (191 aa)) is the GMPS ATP-PPase domain. 240–246 (SGGTDSL) contributes to the ATP binding site.

Homodimer.

The enzyme catalyses XMP + L-glutamine + ATP + H2O = GMP + L-glutamate + AMP + diphosphate + 2 H(+). Its pathway is purine metabolism; GMP biosynthesis; GMP from XMP (L-Gln route): step 1/1. Catalyzes the synthesis of GMP from XMP. The chain is GMP synthase [glutamine-hydrolyzing] from Borrelia garinii subsp. bavariensis (strain ATCC BAA-2496 / DSM 23469 / PBi) (Borreliella bavariensis).